Consider the following 423-residue polypeptide: AP-1 complex subunit mu-1 (423 aa).

S2 carries the N-acetylserine modification. Phosphothreonine occurs at positions 152, 154, and 223. The 254-residue stretch at K168–R421 folds into the MHD domain.

This sequence belongs to the adaptor complexes medium subunit family. As to quaternary structure, adaptor protein complex 1 (AP-1) is a heterotetramer composed of two large adaptins (gamma-type subunit AP1G1 and beta-type subunit AP1B1), a medium adaptin (mu-type subunit AP1M1 or AP1M2) and a small adaptin (sigma-type subunit AP1S1 or AP1S2 or AP1S3). Interacts with MARCHF11. Post-translationally, phosphorylation of membrane-bound AP1M1/AP1M2 increases its affinity for sorting signals.

Its subcellular location is the cytoplasmic vesicle. It is found in the clathrin-coated vesicle membrane. The protein resides in the golgi apparatus. Functionally, subunit of clathrin-associated adaptor protein complex 1 that plays a role in protein sorting in the trans-Golgi network (TGN) and endosomes. The AP complexes mediate the recruitment of clathrin to membranes and the recognition of sorting signals within the cytosolic tails of transmembrane cargo molecules. The sequence is that of AP-1 complex subunit mu-1 from Bos taurus (Bovine).